The sequence spans 407 residues: MNAVPLRQSEPMPQGERVVTILGATGSIGQSTADLVRRGRGRYRVEALTAHSNVAELAKLARELGARFAAVAKEECYAELKAALAGSGIEVGAGESALVEAALRPANWVMAAMSGAAGLKPAMAAAGRGEIVALANKECLVCAGEAFMRHAAANNATVLPVDSEHNAIFQSLGAGRREDLVRIILTASGGPFRTATREQIENATVEQALKHPNWSMGRKITIDSATMFNKALEIIEAFHLFELKADQIDVLVHPQSIIHGLVEFADRSVVAQMGAPDMRTPIAHCLGWPHRIDGPATQLDLAKLTQLTFEAPDPVRFPALRLVREALVAGGAAPTVLNAANEVAVASFLDRKIPFGGIARLVEATLEALVAKGTAKAPQSADEALAVDHTARKTAAALLPEIALKAS.

Positions 25, 26, 27, 28, 53, and 136 each coordinate NADPH. Lys137 serves as a coordination point for 1-deoxy-D-xylulose 5-phosphate. Glu138 provides a ligand contact to NADPH. Asp162 contributes to the Mn(2+) binding site. 1-deoxy-D-xylulose 5-phosphate is bound by residues Ser163, Glu164, Ser188, and His211. Residue Glu164 participates in Mn(2+) binding. Residue Gly217 coordinates NADPH. Residues Ser224, Asn229, Lys230, and Glu233 each contribute to the 1-deoxy-D-xylulose 5-phosphate site. Glu233 contacts Mn(2+).

It belongs to the DXR family. Requires Mg(2+) as cofactor. The cofactor is Mn(2+).

The enzyme catalyses 2-C-methyl-D-erythritol 4-phosphate + NADP(+) = 1-deoxy-D-xylulose 5-phosphate + NADPH + H(+). It participates in isoprenoid biosynthesis; isopentenyl diphosphate biosynthesis via DXP pathway; isopentenyl diphosphate from 1-deoxy-D-xylulose 5-phosphate: step 1/6. In terms of biological role, catalyzes the NADPH-dependent rearrangement and reduction of 1-deoxy-D-xylulose-5-phosphate (DXP) to 2-C-methyl-D-erythritol 4-phosphate (MEP). The chain is 1-deoxy-D-xylulose 5-phosphate reductoisomerase from Afipia carboxidovorans (strain ATCC 49405 / DSM 1227 / KCTC 32145 / OM5) (Oligotropha carboxidovorans).